The primary structure comprises 209 residues: MKGKSSVMEKLAEVVSLKLNKHLKMEGIELIKLKLGVEIIFINISKLAILFLVSYYFGLIKETIIMLAAFGFLRSNAFGLHAKNSIVCTVMSLLMFVLGAYLSKYLLFNNYMVLASFIIVNLLLFRYAPGDTEAHPLVGAKLRDKLKKQAVLMGMLLMAITLIIPDELIKTCISLSSYFEIISILPITYKVLGRRYKNYYEFERTIKQS.

5 consecutive transmembrane segments (helical) span residues 49–71 (ILFLVSYYFGLIKETIIMLAAFG), 82–102 (AKNSIVCTVMSLLMFVLGAYL), 105–125 (YLLFNNYMVLASFIIVNLLLF), 149–169 (QAVLMGMLLMAITLIIPDELI), and 173–193 (ISLSSYFEIISILPITYKVLG).

The protein belongs to the AgrB family.

The protein resides in the cell membrane. Functionally, may be involved in the proteolytic processing of a quorum sensing system signal molecule precursor. The polypeptide is Putative AgrB-like protein (Clostridium acetobutylicum (strain ATCC 824 / DSM 792 / JCM 1419 / IAM 19013 / LMG 5710 / NBRC 13948 / NRRL B-527 / VKM B-1787 / 2291 / W)).